Reading from the N-terminus, the 378-residue chain is Beta sliding clamp (378 aa).

This sequence belongs to the beta sliding clamp family. In terms of assembly, forms a ring-shaped head-to-tail homodimer around DNA which binds and tethers DNA polymerases and other proteins to the DNA. The DNA replisome complex has a single clamp-loading complex (3 tau and 1 each of delta, delta', psi and chi subunits) which binds 3 Pol III cores (1 core on the leading strand and 2 on the lagging strand) each with a beta sliding clamp dimer. Additional proteins in the replisome are other copies of gamma, psi and chi, Ssb, DNA helicase and RNA primase.

The protein resides in the cytoplasm. Its function is as follows. Confers DNA tethering and processivity to DNA polymerases and other proteins. Acts as a clamp, forming a ring around DNA (a reaction catalyzed by the clamp-loading complex) which diffuses in an ATP-independent manner freely and bidirectionally along dsDNA. Initially characterized for its ability to contact the catalytic subunit of DNA polymerase III (Pol III), a complex, multichain enzyme responsible for most of the replicative synthesis in bacteria; Pol III exhibits 3'-5' exonuclease proofreading activity. The beta chain is required for initiation of replication as well as for processivity of DNA replication. This is Beta sliding clamp (dnaN) from Streptococcus pneumoniae serotype 4 (strain ATCC BAA-334 / TIGR4).